A 152-amino-acid chain; its full sequence is Interleukin-3 (152 aa).

Residues 1-19 (MSRLPVLLLLQLLVRPGLQ) form the signal peptide. N-linked (GlcNAc...) asparagine glycosylation is found at asparagine 34 and asparagine 89. An intrachain disulfide couples cysteine 35 to cysteine 103.

The protein belongs to the IL-3 family. As to quaternary structure, interacts with IL3RA. Activated T-cells, mast cells, natural killer cells.

It is found in the secreted. Cytokine secreted predominantly by activated T-lymphocytes as well as mast cells and osteoblastic cells that controls the production and differentiation of hematopoietic progenitor cells into lineage-restricted cells. Also stimulates mature basophils, eosinophils, and monocytes to become functionally activated. In addition, plays an important role in neural cell proliferation and survival. Participates as well in bone homeostasis and inhibits osteoclast differentiation by preventing NF-kappa-B nuclear translocation and activation. Mechanistically, exerts its biological effects through a receptor composed of IL3RA subunit and a signal transducing subunit IL3RB. Receptor stimulation results in the rapid activation of JAK2 kinase activity leading to STAT5-mediated transcriptional program. Alternatively, contributes to cell survival under oxidative stress in non-hematopoietic systems by activating pathways mediated by PI3K/AKT and ERK. The polypeptide is Interleukin-3 (Homo sapiens (Human)).